We begin with the raw amino-acid sequence, 154 residues long: Large ribosomal subunit protein uL13 (154 aa).

A disordered region spans residues D131 to G154.

It belongs to the universal ribosomal protein uL13 family. In terms of assembly, part of the 50S ribosomal subunit.

This protein is one of the early assembly proteins of the 50S ribosomal subunit, although it is not seen to bind rRNA by itself. It is important during the early stages of 50S assembly. In Maricaulis maris (strain MCS10) (Caulobacter maris), this protein is Large ribosomal subunit protein uL13.